The following is a 37-amino-acid chain: Large ribosomal subunit protein bL36c (37 aa).

The protein belongs to the bacterial ribosomal protein bL36 family.

The protein localises to the plastid. It is found in the chloroplast. This chain is Large ribosomal subunit protein bL36c, found in Phalaenopsis aphrodite subsp. formosana (Moth orchid).